The primary structure comprises 168 residues: Putative B3 domain-containing protein Os10g0158600 (168 aa).

Positions 4–97 (VVFASARLNA…KARVMLLNRQ (94 aa)) form a DNA-binding region, TF-B3. A disordered region spans residues 105-151 (KTPSTTSSDKNRSLSPSDQLTRASTSAHPSTSKSIPPLRNGTGSTKR). Polar residues predominate over residues 106-138 (TPSTTSSDKNRSLSPSDQLTRASTSAHPSTSKS).

It localises to the nucleus. In Oryza sativa subsp. japonica (Rice), this protein is Putative B3 domain-containing protein Os10g0158600.